The chain runs to 203 residues: Dephospho-CoA kinase (203 aa).

A DPCK domain is found at V4–E203. ATP is bound at residue A12–T17.

It belongs to the CoaE family.

It is found in the cytoplasm. The catalysed reaction is 3'-dephospho-CoA + ATP = ADP + CoA + H(+). Its pathway is cofactor biosynthesis; coenzyme A biosynthesis; CoA from (R)-pantothenate: step 5/5. Functionally, catalyzes the phosphorylation of the 3'-hydroxyl group of dephosphocoenzyme A to form coenzyme A. The chain is Dephospho-CoA kinase from Staphylococcus epidermidis (strain ATCC 12228 / FDA PCI 1200).